The chain runs to 265 residues: Oxygen-evolving enhancer protein 2-2, chloroplastic (265 aa).

The N-terminal 79 residues, 1 to 79 (MASTQCFLHH…VGSKVSPADA (79 aa)), are a transit peptide targeting the chloroplast.

The protein belongs to the PsbP family.

The protein localises to the plastid. The protein resides in the chloroplast thylakoid membrane. May be involved in the regulation of photosystem II. This Nicotiana tabacum (Common tobacco) protein is Oxygen-evolving enhancer protein 2-2, chloroplastic (PSBP2).